A 365-amino-acid polypeptide reads, in one-letter code: NAC domain-containing protein 43 (365 aa).

In terms of domain architecture, NAC spans 16 to 180 (VPPGFRFHPT…GWVVCRIFKK (165 aa)). Residues 116 to 186 (IGMRKTLVFY…IFKKKNLHKT (71 aa)) mediate DNA binding.

Expressed in various aboveground tissues undergoing thickening of the lignified secondary wall such as anthers, filaments of stamens, the base of carpels, styles, the boundaries between siliques and pedicels, the midrib of leaf veins, and inflorescence stems, specifically in interfascicular fibers (sclerenchyma), cells differentiating into vascular vessels, and xylary fibers (secondary xylem).

The protein localises to the nucleus. Its function is as follows. Transcription activator of genes involved in biosynthesis of secondary walls. Together with NST2 and NST3, required for the secondary cell wall thickening of sclerenchymatous fibers, secondary xylem (tracheary elements), and of the anther endocethium, which is necessary for anther dehiscence. May also regulate the secondary cell wall lignification of other tissues. This chain is NAC domain-containing protein 43 (NAC043), found in Arabidopsis thaliana (Mouse-ear cress).